A 223-amino-acid polypeptide reads, in one-letter code: MIVVYSLGGSVLAAQDSAGLKRYAEALRTIARDNQVYVVVGGGALAREYIGKARDVGASEALCDSIGILATRMNAALLAAALDGSAPFRVPESYDDAIEASKTYRMVVMGGVSPGQTTDAVAALLAEYTRATLLVIATSVNGVYTSDPEKDPGAVKIPRMGAKDLSRMMSQIELKAGSKSPVDPLAAKIIERSHIPTVVVDGRNVANLIRAIDGTHDGTEIRS.

9-10 (GS) provides a ligand contact to ATP. Gly42 contributes to the UMP binding site. ATP-binding residues include Gly43 and Arg47. UMP-binding positions include Asp64 and 112–118 (VSPGQTT). Positions 138, 144, and 147 each coordinate ATP.

The protein belongs to the UMP kinase family. As to quaternary structure, homohexamer.

The protein localises to the cytoplasm. It carries out the reaction UMP + ATP = UDP + ADP. It functions in the pathway pyrimidine metabolism; CTP biosynthesis via de novo pathway; UDP from UMP (UMPK route): step 1/1. Its activity is regulated as follows. Inhibited by UTP. Catalyzes the reversible phosphorylation of UMP to UDP. The protein is Uridylate kinase of Methanothrix thermoacetophila (strain DSM 6194 / JCM 14653 / NBRC 101360 / PT) (Methanosaeta thermophila).